A 340-amino-acid chain; its full sequence is ATP-dependent 6-phosphofructokinase (340 aa).

An ATP-binding site is contributed by Gly11. 21-25 (RAVVR) contributes to the ADP binding site. Residues 72–73 (RY) and 102–105 (GDGS) each bind ATP. A Mg(2+)-binding site is contributed by Asp103. 125 to 127 (TID) contacts substrate. The active-site Proton acceptor is Asp127. Position 154 (Arg154) interacts with ADP. Residues Arg162 and 169–171 (MGR) contribute to the substrate site. Residues 185–187 (GAD), Lys211, and 213–215 (KNH) contribute to the ADP site. Residues Glu222, Arg244, and 250-253 (HIQR) each bind substrate.

This sequence belongs to the phosphofructokinase type A (PFKA) family. ATP-dependent PFK group I subfamily. Prokaryotic clade 'B1' sub-subfamily. As to quaternary structure, homotetramer. The cofactor is Mg(2+).

It is found in the cytoplasm. The enzyme catalyses beta-D-fructose 6-phosphate + ATP = beta-D-fructose 1,6-bisphosphate + ADP + H(+). It functions in the pathway carbohydrate degradation; glycolysis; D-glyceraldehyde 3-phosphate and glycerone phosphate from D-glucose: step 3/4. Its activity is regulated as follows. Allosterically activated by ADP and other diphosphonucleosides, and allosterically inhibited by phosphoenolpyruvate. Its function is as follows. Catalyzes the phosphorylation of D-fructose 6-phosphate to fructose 1,6-bisphosphate by ATP, the first committing step of glycolysis. In Lactococcus lactis subsp. lactis (Streptococcus lactis), this protein is ATP-dependent 6-phosphofructokinase.